Consider the following 390-residue polypeptide: Protein STRICTOSIDINE SYNTHASE-LIKE 3 (390 aa).

The N-terminal stretch at 1-25 is a signal peptide; it reads MAMSILAKIFLVFAIYCAIDPFSHS. 2 N-linked (GlcNAc...) asparagine glycosylation sites follow: Asn95 and Asn108.

The protein belongs to the strictosidine synthase family.

It is found in the vacuole. In Arabidopsis thaliana (Mouse-ear cress), this protein is Protein STRICTOSIDINE SYNTHASE-LIKE 3.